The primary structure comprises 647 residues: MNTGLEISILHNLEMSKLLDTINSPSDLKKLSLDELRELAVQIREELVNRVTLNGGHLASSLGVVELTIALHRVFESPKDKIIWDVGHQSYAHKLLTGRREQFATLRQHGGLSGFTCRDESPHDPFGAGHASTSISAGLGMAVARDLAKEDYSVISVIGDGAISGGMSFEAINNAGHLHTKFIVILNDNGMAISPSTGALSKFLNNVRFDPRFEFAKRNAKQTITNMPFGKAVWAFTKSIKRKFEKSMLPGSLWEELGFIYLGPVDGHNIRELEAALKRAKDFESKPVLIHMITKKGKGYDDAEADAVKYHGISPKSGGLKSSHGLSYSQVFGQTLHKIMSQNPQVVAITAAMTDGCGLGEIAAAFPDRVFDVGICEQHAVTFAAGMATQGYIPVVVIYSTFLQRGFDQIIHDVCLQKLPVVFAIDRGGIVGDDGKTHQGIFDLSFMSLIPDMVVSAPSDENDLQHLIYTAVNSGKPFALRYPRGFGEGAEIESSLHNIPIGQNEILVNGSDVAILATGKSVAFAKDALEILTESGIKPTLVNNRYISPLDSELVLKIAQSHKYLVTVEENVISGGLGSRINTLLAEAGLVNKIKIANIGIPDKFVEHGNQSLLRAKYGLDGKGIAQRVLSLVGNPNEMKHPQIICP.

Thiamine diphosphate is bound by residues histidine 88 and 129-131; that span reads GHA. Residue aspartate 160 coordinates Mg(2+). Residues 161–162, asparagine 189, tyrosine 300, and glutamate 377 each bind thiamine diphosphate; that span reads GA. Asparagine 189 provides a ligand contact to Mg(2+).

The protein belongs to the transketolase family. DXPS subfamily. Homodimer. Requires Mg(2+) as cofactor. Thiamine diphosphate is required as a cofactor.

It catalyses the reaction D-glyceraldehyde 3-phosphate + pyruvate + H(+) = 1-deoxy-D-xylulose 5-phosphate + CO2. It participates in metabolic intermediate biosynthesis; 1-deoxy-D-xylulose 5-phosphate biosynthesis; 1-deoxy-D-xylulose 5-phosphate from D-glyceraldehyde 3-phosphate and pyruvate: step 1/1. Functionally, catalyzes the acyloin condensation reaction between C atoms 2 and 3 of pyruvate and glyceraldehyde 3-phosphate to yield 1-deoxy-D-xylulose-5-phosphate (DXP). The protein is 1-deoxy-D-xylulose-5-phosphate synthase of Dehalococcoides mccartyi (strain CBDB1).